Reading from the N-terminus, the 284-residue chain is Acetylglutamate kinase (284 aa).

Residues 64–65 (GG), arginine 86, and asparagine 181 each bind substrate.

This sequence belongs to the acetylglutamate kinase family. ArgB subfamily.

Its subcellular location is the cytoplasm. The catalysed reaction is N-acetyl-L-glutamate + ATP = N-acetyl-L-glutamyl 5-phosphate + ADP. It participates in amino-acid biosynthesis; L-arginine biosynthesis; N(2)-acetyl-L-ornithine from L-glutamate: step 2/4. Functionally, catalyzes the ATP-dependent phosphorylation of N-acetyl-L-glutamate. The protein is Acetylglutamate kinase of Wolinella succinogenes (strain ATCC 29543 / DSM 1740 / CCUG 13145 / JCM 31913 / LMG 7466 / NCTC 11488 / FDC 602W) (Vibrio succinogenes).